The sequence spans 576 residues: Insulin-like growth factor 2 mRNA-binding protein 1 (576 aa).

RRM domains follow at residues 2–75 and 81–156; these read NKLY…HSVP and RKIQ…YIPD. The tract at residues 158 to 189 is disordered; it reads QSVQGPENGRRGGFGARGAPRQGSPVTAGAPV. KH domains follow at residues 195-260 and 276-343; these read DIPL…CKMI and EVPL…EQEI. Tyr396 carries the post-translational modification Phosphotyrosine; by SRC. 2 KH domains span residues 404–469 and 486–552; these read QETV…QGRI and KLET…QRKI.

This sequence belongs to the RRM IMP/VICKZ family. In terms of assembly, can form homooligomers and heterooligomers with IGF2BP1 and IGF2BP3 in an RNA-dependent manner. Associates with the cytoskeleton, predominantly with actin filament bundles and occasionally with microtubules. In a heterologous system, interacts with ELAVL1, DHX9 and HNRNPU. Post-translationally, phosphorylated by SRC at Tyr-396. This residue is involved in ACTB mRNA binding, its phosphorylation impairs association with ACTB mRNA and hence abolishes translational repression. Phosphorylation occurs in close proximity to filopodia and in the growth cones of differentiated neuroglioblastoma cells. Expressed in neurons and embryonic fibroblasts (at protein level).

The protein localises to the nucleus. It localises to the cytoplasm. The protein resides in the perinuclear region. Its subcellular location is the P-body. It is found in the stress granule. The protein localises to the cell projection. It localises to the growth cone. The protein resides in the filopodium. Its subcellular location is the lamellipodium. In terms of biological role, RNA-binding factor that recruits target transcripts to cytoplasmic protein-RNA complexes (mRNPs). This transcript 'caging' into mRNPs allows mRNA transport and transient storage. It also modulates the rate and location at which target transcripts encounter the translational apparatus and shields them from endonuclease attacks or microRNA-mediated degradation. Preferentially binds to N6-methyladenosine (m6A)-containing mRNAs and increases their stability. Plays a direct role in the transport and translation of transcripts required for axonal regeneration in adult sensory neurons. Regulates localized beta-actin/ACTB mRNA translation in polarized cells, a crucial process for cell migration and neurite outgrowth. Co-transcriptionally associates with the ACTB mRNA in the nucleus. This binding involves by a conserved 54-nucleotide element in the ACTB mRNA 3'-UTR, known as the 'zipcode'. The ribonucleoparticle (RNP) thus formed is exported to the cytoplasm, binds to a motor protein and is transported along the cytoskeleton to the cell periphery. During transport, IGF2BP1 prevents beta-actin mRNA from being translated into protein. When the RNP complex reaches its destination near the plasma membrane, IGF2BP1 is phosphorylated by SRC. This releases the mRNA, allowing ribosomal 40S and 60S subunits to assemble and initiate ACTB protein synthesis. The monomeric ACTB protein then assembles into the subcortical actin cytoskeleton, which pushes the leading edge onwards. Binds MYC mRNA. Binding to MYC mRNA is enhanced by m6A-modification of the CRD. Promotes the directed movement of cells by fine-tuning intracellular signaling networks. Binds to MAPK4 3'-UTR and inhibits its translation. Interacts with PTEN transcript open reading frame (ORF) and prevents mRNA decay. This combined action on MAPK4 (down-regulation) and PTEN (up-regulation) antagonizes HSPB1 phosphorylation, consequently it prevents G-actin sequestration by phosphorylated HSPB1, allowing F-actin polymerization. Hence enhances the velocity of cell migration and stimulates directed cell migration by PTEN-modulated polarization. The protein is Insulin-like growth factor 2 mRNA-binding protein 1 (IGF2BP1) of Gallus gallus (Chicken).